A 514-amino-acid chain; its full sequence is MHTVVVGTSGTTAEDVVAVARHGARVELSAAAVEALAAARLIVDALAAKPEPVYGVSTGFGALASRHIGTELRAQLQRNIVRSHAAGMGPRVEREVVRALMFLRLKTVASGHTGVRPEVAQTMADVLNAGITPVVHEYGSLGCSGDLAPLSHCALTLMGEGEAEGPDGTVRPAGELLAAHGIAPVELREKEGLALLNGTDGMLGMLVMALADLRNLYTSADITAALSLEALLGTDKVLAPELHAIRPHPGQGVSADNMSRVLAGSGLTGHHQDDAPRVQDAYSVRCAPQVNGAGRDTLDHAALVAGRELASSVDNPVVLPDGRVESNGNFHGAPVAYVLDFLAIVAADLGSICERRTDRLLDKNRSHGLPPFLADDAGVDSGLMIAQYTQAALVSEMKRLAVPASADSIPSSAMQEDHVSMGWSAARKLRTAVDNLARIVAVELYAATRAIELRAAEGLTPAPASEAVVAALRAAGAEGPGPDRFLAPDLAAADTFVREGRLVAAVEPVTGPLA.

A cross-link (5-imidazolinone (Cys-Gly)) is located at residues 143 to 145 (CSG). Ser-144 carries the 2,3-didehydroalanine (Ser) modification.

The protein belongs to the PAL/histidase family. Post-translationally, contains an active site 4-methylidene-imidazol-5-one (MIO), which is formed autocatalytically by cyclization and dehydration of residues Cys-Ser-Gly.

It localises to the cytoplasm. The enzyme catalyses L-histidine = trans-urocanate + NH4(+). Its pathway is amino-acid degradation; L-histidine degradation into L-glutamate; N-formimidoyl-L-glutamate from L-histidine: step 1/3. The polypeptide is Histidine ammonia-lyase (hutH) (Streptomyces griseus).